The sequence spans 816 residues: Leucine--tRNA ligase (816 aa).

A 'HIGH' region motif is present at residues 46–56; the sequence is PYPSGALHMGH. The 'KMSKS' region motif lies at 638 to 642; that stretch reads KMSKS. Residue K641 coordinates ATP.

Belongs to the class-I aminoacyl-tRNA synthetase family.

It localises to the cytoplasm. It carries out the reaction tRNA(Leu) + L-leucine + ATP = L-leucyl-tRNA(Leu) + AMP + diphosphate. In Xanthomonas campestris pv. campestris (strain ATCC 33913 / DSM 3586 / NCPPB 528 / LMG 568 / P 25), this protein is Leucine--tRNA ligase.